The chain runs to 559 residues: MLTKNTNNFSNSSNDPLNLYLNKNYAALANSDLTKKIDSDGNTVVHKMAKNLDHDAFDSILKHNPTAFKYNVINTANKRSELPIHKAMETLQSGGDPDHGFIDYLINGLGANPNVPDASGRTITQVNPTTYNPTNPTGSTNVPGITHLPSNAVNDQSVKQLNDQVIKNIRNLAKTAEDNINKISPKLGQSLRDKGVTPDSITNAAKNVVDRMPMIDKFFGKQTANQVGTVSQVTGGDNNVEFLRQLTNHYSTLRGGRSTSDRSDMNRYDSFVAKNKNSILNNYDRQYNDTFSSTGGKANKKLGDINTEDINNLFTDDAQNENSDNSMNTWGGAKKTYGNKSRSNDNSDNNDDSDDSERDIIDRRQTTKYQNMFSSQERPRERNTKVDEIYRSFVKKIMDLLGVDEETAKLYRSAIKIDIGNKNPELRKWENDELKIQEMEKIFNNKQSLQNALDKIDMDQIKSEMSRRRDESNKRRDEKRKDREEKRRQKRSQRSDTRKQGIDSVTSDEATSDQTQSTDSNNTTQTASKKRTRKSTTSQSRVGPNNYLRSEDIIISTEN.

Disordered stretches follow at residues 315-360 (TDDA…ERDI) and 454-559 (DKID…STEN). The span at 320–329 (NENSDNSMNT) shows a compositional bias: polar residues. Residues 348–357 (DNNDDSDDSE) are compositionally biased toward acidic residues. Residues 433–495 (ELKIQEMEKI…KRRQKRSQRS (63 aa)) adopt a coiled-coil conformation. Over residues 454–501 (DKIDMDQIKSEMSRRRDESNKRRDEKRKDREEKRRQKRSQRSDTRKQG) the composition is skewed to basic and acidic residues. A compositionally biased stretch (low complexity) spans 507-527 (SDEATSDQTQSTDSNNTTQTA).

The protein localises to the virion. This is an uncharacterized protein from Acanthamoeba polyphaga mimivirus (APMV).